Reading from the N-terminus, the 99-residue chain is Integration host factor subunit alpha (99 aa).

The interval Phe-49–Ala-75 is disordered.

It belongs to the bacterial histone-like protein family. Heterodimer of an alpha and a beta chain.

Its function is as follows. This protein is one of the two subunits of integration host factor, a specific DNA-binding protein that functions in genetic recombination as well as in transcriptional and translational control. The chain is Integration host factor subunit alpha from Klebsiella pneumoniae (strain 342).